The primary structure comprises 318 residues: Transcription factor zip-4 (318 aa).

The span at 1–13 shows a compositional bias: polar residues; it reads MYNYNYSRGNKSM. 4 disordered regions span residues 1–20, 147–205, 238–257, and 273–318; these read MYNY…PRFH, EKKP…TAAA, NNDA…LQKD, and ELQS…KSNY. The segment covering 173–190 has biased composition (acidic residues); the sequence is DYQEEGETSLSDNDESVD. Residues 228-291 enclose the bZIP domain; sequence EPIYKLKRAR…ERDQQLIKQL (64 aa). Residues 232 to 266 are basic motif; that stretch reads KLKRARNNDAVRKSRNKAKELQLQKDEEYDEMKKR. The stretch at 242–280 forms a coiled coil; the sequence is VRKSRNKAKELQLQKDEEYDEMKKRITQLEAELQSEREG. Residues 267 to 274 are leucine-zipper; that stretch reads ITQLEAEL. The span at 275 to 298 shows a compositional bias: basic and acidic residues; that stretch reads QSEREGRERDQQLIKQLIREKEST. Polar residues predominate over residues 307–318; that stretch reads RNALESFNKSNY.

This sequence belongs to the bZIP family. C/EBP subfamily.

It is found in the nucleus. Functionally, transcription factor that binds to the promoter and the enhancer regions of target genes. Involved in responding to mitochondrial damage. Has a protective role in response to infection by the Gram-negative bacterium P.aeruginosa. The polypeptide is Transcription factor zip-4 (Caenorhabditis elegans).